Here is a 534-residue protein sequence, read N- to C-terminus: Probable DNA ligase (534 aa).

An ATP-binding site is contributed by Glu-213. The active-site N6-AMP-lysine intermediate is Lys-215. Residues Arg-220, Arg-235, Glu-264, Phe-303, Arg-375, and Lys-381 each contribute to the ATP site.

It belongs to the ATP-dependent DNA ligase family. The cofactor is Mg(2+).

It catalyses the reaction ATP + (deoxyribonucleotide)n-3'-hydroxyl + 5'-phospho-(deoxyribonucleotide)m = (deoxyribonucleotide)n+m + AMP + diphosphate.. Functionally, DNA ligase that seals nicks in double-stranded DNA during DNA replication, DNA recombination and DNA repair. The polypeptide is Probable DNA ligase (Mycolicibacterium vanbaalenii (strain DSM 7251 / JCM 13017 / BCRC 16820 / KCTC 9966 / NRRL B-24157 / PYR-1) (Mycobacterium vanbaalenii)).